The following is a 425-amino-acid chain: Glucose-6-phosphate 1-dehydrogenase (425 aa).

2 residues coordinate NADP(+): arginine 44 and lysine 135. Histidine 165, lysine 169, glutamate 201, and aspartate 220 together coordinate substrate. Histidine 225 (proton acceptor) is an active-site residue. Lysine 311 contributes to the substrate binding site.

It belongs to the glucose-6-phosphate dehydrogenase family.

It catalyses the reaction D-glucose 6-phosphate + NADP(+) = 6-phospho-D-glucono-1,5-lactone + NADPH + H(+). Its pathway is carbohydrate degradation; pentose phosphate pathway; D-ribulose 5-phosphate from D-glucose 6-phosphate (oxidative stage): step 1/3. Its function is as follows. Catalyzes the oxidation of glucose 6-phosphate to 6-phosphogluconolactone. The polypeptide is Glucose-6-phosphate 1-dehydrogenase (Helicobacter pylori (strain ATCC 700392 / 26695) (Campylobacter pylori)).